A 445-amino-acid chain; its full sequence is Phosphoglucosamine mutase (445 aa).

S102 serves as the catalytic Phosphoserine intermediate. Mg(2+)-binding residues include S102, D241, D243, and D245. S102 carries the phosphoserine modification.

Belongs to the phosphohexose mutase family. Mg(2+) serves as cofactor. In terms of processing, activated by phosphorylation.

It catalyses the reaction alpha-D-glucosamine 1-phosphate = D-glucosamine 6-phosphate. Its function is as follows. Catalyzes the conversion of glucosamine-6-phosphate to glucosamine-1-phosphate. The protein is Phosphoglucosamine mutase of Enterobacter sp. (strain 638).